Here is a 311-residue protein sequence, read N- to C-terminus: MQDFAKKKINIKSPAKINLHLEVIGKREDGFHELAMIMQNIDLADYLEFEINNEGLIKLESDCNDLSLSDDNLIVKSANLLRKKSNIDYGANIFLRKNIPIGAGLAGGSSNAAATLIGLNNLWDLKLDQETLCSLASTLGSDIPFFINGGIQLCFGRGEILEKLDSTLEYGAILLKNPNVSVSTAETYKKYSNRFCDQYLTDREMIENIRKNLRDNGLNNLNFDNQHLSIKNDLQLVVENENDSVKQALYLLSKLENCLTFSMSGSGPTCFALFKDKETAKKELTANSKLFKDKGYDSWVCTFLEKGITFI.

Residue Lys16 is part of the active site. 100–110 (PIGAGLAGGSS) is a binding site for ATP. Asp142 is an active-site residue.

Belongs to the GHMP kinase family. IspE subfamily.

It catalyses the reaction 4-CDP-2-C-methyl-D-erythritol + ATP = 4-CDP-2-C-methyl-D-erythritol 2-phosphate + ADP + H(+). The protein operates within isoprenoid biosynthesis; isopentenyl diphosphate biosynthesis via DXP pathway; isopentenyl diphosphate from 1-deoxy-D-xylulose 5-phosphate: step 3/6. In terms of biological role, catalyzes the phosphorylation of the position 2 hydroxy group of 4-diphosphocytidyl-2C-methyl-D-erythritol. The sequence is that of 4-diphosphocytidyl-2-C-methyl-D-erythritol kinase from Prochlorococcus marinus (strain AS9601).